The following is a 361-amino-acid chain: Trans-2,3-enoyl-CoA reductase-like (361 aa).

Phosphoserine is present on residues S33 and S35. Transmembrane regions (helical) follow at residues 139–159 (VGWT…YLLF), 181–201 (VHLA…ETLF), 215–235 (LIKG…YINH), and 309–329 (ISFT…LMTI).

This sequence belongs to the steroid 5-alpha reductase family. In terms of tissue distribution, expression is highest in the heart with very low to almost undetectable levels in brain, skeletal muscle, stomach, pancreas, liver, kidney, small intestine, and uterus.

It localises to the membrane. Its subcellular location is the endoplasmic reticulum. The chain is Trans-2,3-enoyl-CoA reductase-like (Tecrl) from Mus musculus (Mouse).